Here is a 128-residue protein sequence, read N- to C-terminus: Probable 4-amino-4-deoxy-L-arabinose-phosphoundecaprenol flippase subunit ArnF (128 aa).

Topologically, residues 1–2 (MG) are cytoplasmic. A helical transmembrane segment spans residues 3 to 23 (LMWGLFSVIIASAAQLSLGFA). Topologically, residues 24-32 (ASHLPPMTH) are periplasmic. The helical transmembrane segment at 33–53 (LWDFIAALLAFGLDARILLLG) threads the bilayer. The Cytoplasmic portion of the chain corresponds to 54–76 (LQGYLLSVFCWYKTLHKLALSKA). The chain crosses the membrane as a helical span at residues 77-97 (YALLSMSYVLVWIASMVLPGW). Residues 98 to 100 (EGT) lie on the Periplasmic side of the membrane. A helical transmembrane segment spans residues 101–121 (FSLKALLGVACIMSGLMLIFL). Residues 122–128 (PTTKQRY) lie on the Cytoplasmic side of the membrane.

Belongs to the ArnF family. In terms of assembly, heterodimer of ArnE and ArnF.

It is found in the cell inner membrane. The protein operates within bacterial outer membrane biogenesis; lipopolysaccharide biosynthesis. Functionally, translocates 4-amino-4-deoxy-L-arabinose-phosphoundecaprenol (alpha-L-Ara4N-phosphoundecaprenol) from the cytoplasmic to the periplasmic side of the inner membrane. The protein is Probable 4-amino-4-deoxy-L-arabinose-phosphoundecaprenol flippase subunit ArnF of Escherichia coli O7:K1 (strain IAI39 / ExPEC).